Reading from the N-terminus, the 96-residue chain is Large ribosomal subunit protein bL27 (96 aa).

A propeptide spanning residues 1-9 (MLKFDIQHF) is cleaved from the precursor. A disordered region spans residues 1–33 (MLKFDIQHFAHKKGGGSTSNGRDSESKRLGAKR). A compositionally biased stretch (basic and acidic residues) spans 22 to 33 (RDSESKRLGAKR).

The protein belongs to the bacterial ribosomal protein bL27 family. The N-terminus is cleaved by ribosomal processing cysteine protease Prp.

The sequence is that of Large ribosomal subunit protein bL27 from Listeria innocua serovar 6a (strain ATCC BAA-680 / CLIP 11262).